We begin with the raw amino-acid sequence, 695 residues long: RING finger protein 145 (695 aa).

The next 13 helical transmembrane spans lie at 53–73 (YLAL…LTLP), 77–97 (LAKL…HQIS), 123–143 (FITA…VMKT), 146–166 (IWLF…VPIE), 168–188 (IVVI…YFLA), 225–245 (LVVP…QIYT), 275–295 (YSLL…LTLC), 316–336 (TEGV…LQVV), 340–360 (FLLS…MLEI), 384–404 (SLCL…CQFF), 410–430 (LLII…TLFI), 460–480 (LLEF…TVFG), and 482–502 (WTVM…WLRA). The RING-type; atypical zinc finger occupies 537–575 (CSICYQDMNSAVITPCSHFFHPGCLKKWLYVQETCPLCH). The segment covering 585–603 (ATGESGSSTNPVSEQSATN) has biased composition (polar residues). Residues 585–610 (ATGESGSSTNPVSEQSATNPPLGPVS) are disordered.

It localises to the membrane. This chain is RING finger protein 145 (rnf145), found in Xenopus tropicalis (Western clawed frog).